Here is a 622-residue protein sequence, read N- to C-terminus: Chaperone protein HscA homolog (622 aa).

The protein belongs to the heat shock protein 70 family.

Functionally, chaperone involved in the maturation of iron-sulfur cluster-containing proteins. Has a low intrinsic ATPase activity which is markedly stimulated by HscB. This chain is Chaperone protein HscA homolog, found in Methylobacillus flagellatus (strain ATCC 51484 / DSM 6875 / VKM B-1610 / KT).